We begin with the raw amino-acid sequence, 545 residues long: POTE ankyrin domain family member H (545 aa).

ANK repeat units lie at residues Leu180 to Lys208, Gln209 to Ile238, Lys242 to Ile271, Tyr275 to Ser304, His308 to Ala337, Tyr341 to Ser370, and Ser374 to Lys404. A disordered region spans residues Ser406–Gly524. Basic and acidic residues-rich tracts occupy residues Gln414–Gly429 and Glu443–Lys458. The span at Thr513–Gly524 shows a compositional bias: polar residues.

This sequence belongs to the POTE family.

The protein is POTE ankyrin domain family member H (POTEH) of Homo sapiens (Human).